The primary structure comprises 122 residues: Putative 2'-deoxynucleoside 5'-phosphate N-hydrolase 1 (122 aa).

Substrate-binding positions include 4–10 (FLSGSIR), Tyr-19, His-37, Glu-83, and 105–107 (SAM).

It belongs to the 2'-deoxynucleoside 5'-phosphate N-hydrolase 1 family. Monomer and homodimer.

The catalysed reaction is a pyrimidine 2'-deoxyribonucleoside 5'-phosphate + H2O = a pyrimidine nucleobase + 2-deoxy-D-ribose 5-phosphate. It carries out the reaction a purine 2'-deoxyribonucleoside 5'-phosphate + H2O = a purine nucleobase + 2-deoxy-D-ribose 5-phosphate. In terms of biological role, catalyzes the cleavage of the N-glycosidic bond of deoxyribonucleoside 5'-monophosphates to yield deoxyribose 5-phosphate and a purine or pyrimidine base. This chain is Putative 2'-deoxynucleoside 5'-phosphate N-hydrolase 1, found in Methanococcoides burtonii (strain DSM 6242 / NBRC 107633 / OCM 468 / ACE-M).